Consider the following 271-residue polypeptide: ATP synthase subunit a (271 aa).

5 helical membrane-spanning segments follow: residues 38-58 (FWTL…LFLA), 100-120 (LIAP…LMDL), 146-166 (DVNI…FYSI), 220-240 (LIFI…LNVP), and 242-262 (AIFH…LTIV).

It belongs to the ATPase A chain family. In terms of assembly, F-type ATPases have 2 components, CF(1) - the catalytic core - and CF(0) - the membrane proton channel. CF(1) has five subunits: alpha(3), beta(3), gamma(1), delta(1), epsilon(1). CF(0) has three main subunits: a(1), b(2) and c(9-12). The alpha and beta chains form an alternating ring which encloses part of the gamma chain. CF(1) is attached to CF(0) by a central stalk formed by the gamma and epsilon chains, while a peripheral stalk is formed by the delta and b chains.

The protein resides in the cell inner membrane. Functionally, key component of the proton channel; it plays a direct role in the translocation of protons across the membrane. The polypeptide is ATP synthase subunit a (Enterobacter sp. (strain 638)).